Here is a 562-residue protein sequence, read N- to C-terminus: Gut esterase 1 (562 aa).

An N-terminal signal peptide occupies residues Met-1 to Ala-16. An intrachain disulfide couples Cys-75 to Cys-93. Ser-199 serves as the catalytic Acyl-ester intermediate. A disulfide bridge connects residues Cys-251 and Cys-259. Active-site charge relay system residues include Glu-320 and His-451. The Prevents secretion from ER signature appears at Lys-559–Leu-562.

The protein belongs to the type-B carboxylesterase/lipase family. Expressed only in the intestine.

It localises to the endoplasmic reticulum lumen. It catalyses the reaction a carboxylic ester + H2O = an alcohol + a carboxylate + H(+). This is Gut esterase 1 (ges-1) from Caenorhabditis briggsae.